We begin with the raw amino-acid sequence, 318 residues long: tRNA dimethylallyltransferase (318 aa).

Position 28–35 (28–35 (GPTGAGKS)) interacts with ATP. 30–35 (TGAGKS) contributes to the substrate binding site. Positions 53–56 (DSMQ) are interaction with substrate tRNA.

The protein belongs to the IPP transferase family. Monomer. It depends on Mg(2+) as a cofactor.

It catalyses the reaction adenosine(37) in tRNA + dimethylallyl diphosphate = N(6)-dimethylallyladenosine(37) in tRNA + diphosphate. In terms of biological role, catalyzes the transfer of a dimethylallyl group onto the adenine at position 37 in tRNAs that read codons beginning with uridine, leading to the formation of N6-(dimethylallyl)adenosine (i(6)A). This chain is tRNA dimethylallyltransferase, found in Parafrankia sp. (strain EAN1pec).